The sequence spans 299 residues: tRNA(Met) cytidine acetate ligase (299 aa).

ATP contacts are provided by residues 6–19, Gly-100, Asn-157, and Arg-182; that span reads IAEY…HIYM.

Belongs to the TmcAL family.

Its subcellular location is the cytoplasm. It catalyses the reaction cytidine(34) in elongator tRNA(Met) + acetate + ATP = N(4)-acetylcytidine(34) in elongator tRNA(Met) + AMP + diphosphate. In terms of biological role, catalyzes the formation of N(4)-acetylcytidine (ac(4)C) at the wobble position of elongator tRNA(Met), using acetate and ATP as substrates. First activates an acetate ion to form acetyladenylate (Ac-AMP) and then transfers the acetyl group to tRNA to form ac(4)C34. The protein is tRNA(Met) cytidine acetate ligase of Mycoplasma mobile (strain ATCC 43663 / 163K / NCTC 11711) (Mesomycoplasma mobile).